The primary structure comprises 208 residues: ATP-dependent Clp protease proteolytic subunit (208 aa).

Ser105 serves as the catalytic Nucleophile. His130 is a catalytic residue.

This sequence belongs to the peptidase S14 family. In terms of assembly, fourteen ClpP subunits assemble into 2 heptameric rings which stack back to back to give a disk-like structure with a central cavity, resembling the structure of eukaryotic proteasomes.

The protein resides in the cytoplasm. The catalysed reaction is Hydrolysis of proteins to small peptides in the presence of ATP and magnesium. alpha-casein is the usual test substrate. In the absence of ATP, only oligopeptides shorter than five residues are hydrolyzed (such as succinyl-Leu-Tyr-|-NHMec, and Leu-Tyr-Leu-|-Tyr-Trp, in which cleavage of the -Tyr-|-Leu- and -Tyr-|-Trp bonds also occurs).. In terms of biological role, cleaves peptides in various proteins in a process that requires ATP hydrolysis. Has a chymotrypsin-like activity. Plays a major role in the degradation of misfolded proteins. This chain is ATP-dependent Clp protease proteolytic subunit, found in Xylella fastidiosa (strain 9a5c).